The sequence spans 335 residues: Oligopeptide transport ATP-binding protein OppD (335 aa).

Positions 18–267 (LEVNDLRVTF…PVHPYSIGLL (250 aa)) constitute an ABC transporter domain. An ATP-binding site is contributed by 54–61 (GESGSGKS).

It belongs to the ABC transporter superfamily. As to quaternary structure, the complex is composed of two ATP-binding proteins (OppD and OppF), two transmembrane proteins (OppB and OppC) and a solute-binding protein (OppA).

Its subcellular location is the cell inner membrane. The enzyme catalyses a [peptide](out) + ATP + H2O = a [peptide](in) + ADP + phosphate + H(+). It carries out the reaction L-alanyl-gamma-D-glutamyl-meso-2,6-diaminopimelate(out) + ATP + H2O = L-alanyl-gamma-D-glutamyl-meso-2,6-diaminopimelate(in) + ADP + phosphate + H(+). Functionally, part of the ABC transporter complex OppABCDF involved in the uptake of oligopeptides, including the cell wall murein tripeptide L-alanyl-gamma-D-glutamyl-meso-diaminopimelate. Responsible for energy coupling to the transport system. Plays an important nutritional role and is involved in the recycling of cell wall peptides. Binds ATP. This Salmonella typhimurium (strain LT2 / SGSC1412 / ATCC 700720) protein is Oligopeptide transport ATP-binding protein OppD.